Here is a 312-residue protein sequence, read N- to C-terminus: Holliday junction branch migration complex subunit RuvB (312 aa).

The segment at 1–168 (MKTNYEFRPQ…FGHIFHLNEY (168 aa)) is large ATPase domain (RuvB-L). Residues Arg-8, Gly-49, Lys-52, Thr-53, Thr-54, 115-117 (EDF), Arg-158, Tyr-168, and Arg-206 contribute to the ATP site. Mg(2+) is bound at residue Thr-53. The segment at 169 to 234 (EPSEISAIIL…DIKNIFKKIQ (66 aa)) is small ATPAse domain (RuvB-S). The segment at 237 to 312 (EFGLDEQDIN…DFLKNNQLIK (76 aa)) is head domain (RuvB-H). DNA-binding residues include Lys-290 and Arg-295.

The protein belongs to the RuvB family. As to quaternary structure, homohexamer. Forms an RuvA(8)-RuvB(12)-Holliday junction (HJ) complex. HJ DNA is sandwiched between 2 RuvA tetramers; dsDNA enters through RuvA and exits via RuvB. An RuvB hexamer assembles on each DNA strand where it exits the tetramer. Each RuvB hexamer is contacted by two RuvA subunits (via domain III) on 2 adjacent RuvB subunits; this complex drives branch migration. In the full resolvosome a probable DNA-RuvA(4)-RuvB(12)-RuvC(2) complex forms which resolves the HJ.

It is found in the cytoplasm. It carries out the reaction ATP + H2O = ADP + phosphate + H(+). Its function is as follows. The RuvA-RuvB-RuvC complex processes Holliday junction (HJ) DNA during genetic recombination and DNA repair, while the RuvA-RuvB complex plays an important role in the rescue of blocked DNA replication forks via replication fork reversal (RFR). RuvA specifically binds to HJ cruciform DNA, conferring on it an open structure. The RuvB hexamer acts as an ATP-dependent pump, pulling dsDNA into and through the RuvAB complex. RuvB forms 2 homohexamers on either side of HJ DNA bound by 1 or 2 RuvA tetramers; 4 subunits per hexamer contact DNA at a time. Coordinated motions by a converter formed by DNA-disengaged RuvB subunits stimulates ATP hydrolysis and nucleotide exchange. Immobilization of the converter enables RuvB to convert the ATP-contained energy into a lever motion, pulling 2 nucleotides of DNA out of the RuvA tetramer per ATP hydrolyzed, thus driving DNA branch migration. The RuvB motors rotate together with the DNA substrate, which together with the progressing nucleotide cycle form the mechanistic basis for DNA recombination by continuous HJ branch migration. Branch migration allows RuvC to scan DNA until it finds its consensus sequence, where it cleaves and resolves cruciform DNA. This Ureaplasma parvum serovar 3 (strain ATCC 27815 / 27 / NCTC 11736) protein is Holliday junction branch migration complex subunit RuvB.